A 309-amino-acid polypeptide reads, in one-letter code: Thioesterase lcsJ (309 aa).

Residues 11 to 31 (IAQVHGFVFSWWGVILLLAII) form a helical membrane-spanning segment. Residues 61–83 (ASPTAENAQRRVPKTPKTGATDT) form a disordered region. Residue Asn112 is glycosylated (N-linked (GlcNAc...) asparagine). Positions 239–275 (SGWIPPRPESTGNSKSLDSLQANGHGATENGKHDAKD) are disordered. The span at 248 to 260 (STGNSKSLDSLQA) shows a compositional bias: polar residues.

The protein belongs to the lcsJ thioesterase family.

Its subcellular location is the membrane. Its pathway is secondary metabolite biosynthesis. In terms of biological role, thioesterase; part of the gene cluster that mediates the biosynthesis of the lipopeptide antibiotics leucinostatins that show extensive biological activities, including antimalarial, antiviral, antibacterial, antifungal, and antitumor activities, as well as phytotoxic. Leucinostatin A contains nine amino acid residues, including the unusual amino acid 4-methyl-L-proline (MePro), 2-amino-6-hydroxy-4-methyl-8-oxodecanoic acid (AHyMeOA), 3-hydroxyleucine (HyLeu), alpha-aminoisobutyric acid (AIB), beta-Ala, a 4-methylhex-2-enoic acid at the N-terminus as well as a N1,N1-dimethylpropane-1,2-diamine (DPD) at the C-terminus. The biosynthesis of leucinostatins is probably initiated with the assembly of 4-methylhex-2-enoic acid by a reducing PKS. Two reducing polyketide synthases, lcsB and lcsC, have been identified in the cluster and it is not clear which is the one that assembles 4-methylhex-2-enoic acid since both contain KS, AT, DH, cMT, ER, KR and ACP domains. The polyketide residue might be transferred to the NRPS lcsA, mediated by two additional enzymes, the acyl-CoA ligase lcsD and the thioesterase lcsE. The linear polyketide carboxylic acid, which is released from PKS, is converted to a CoA thioester by lcsD, and then lcsE hydrolyzes the thiol bond and shuttles the polyketide intermediate to lcsA. The C domain of the first module catalyzed the condensation of 4-methylhex-2-enoic acid and MePro carried by domain A1, followed by successive condensations of nine amino acids to trigger the elongation of the linear peptide. A5 and A6 domains of lcsA are proposed to incorporate leucine, A2 AHyMeOA, and A3 incorporates HyLeu. A4, A7 and A8 incorporate AIB. The AHyMeOA in leucinostatin A activated by the A2 might be produced by the second PKS (lcsB or lcsC) present within the cluster. The MePro is probably produced via leucine cyclization and may originate from a separate pathway, independent of the cluster. Another nonproteinogenic amino acid, beta-Ala, could be produced by an aspartic acid decarboxylase also localized outside of the cluster. Two candidates are VFPBJ_01400 and VFPBJ_10476. The final peptide scaffold may be released by the NAD(P)H-dependent thioester reductase (TE) at the C-terminal region of lcsA. Transamination of the lcsA product by the transaminase lcsP may produce DPD at the C-terminus. Further hydroxylation steps performed alternatively by the cytochrome P450 monooxygenases lcsI, lcsK and lcsN then yield the non-methylated leucinostatins precursor. It is also possible that leucines can be hydroxylated prior to their incorporation into the peptide. Varying extents of methylation then lead to the formation of leucinostatins A and B. In Purpureocillium lilacinum (Paecilomyces lilacinus), this protein is Thioesterase lcsJ.